Here is a 217-residue protein sequence, read N- to C-terminus: 2-phospho-L-lactate guanylyltransferase (217 aa).

This sequence belongs to the CofC family. In terms of assembly, homodimer.

The enzyme catalyses (2S)-2-phospholactate + GTP + H(+) = (2S)-lactyl-2-diphospho-5'-guanosine + diphosphate. It functions in the pathway cofactor biosynthesis; coenzyme F420 biosynthesis. Guanylyltransferase that catalyzes the activation of (2S)-2-phospholactate (2-PL) as (2S)-lactyl-2-diphospho-5'-guanosine, via the condensation of 2-PL with GTP. It is involved in the biosynthesis of coenzyme F420, a hydride carrier cofactor. This is 2-phospho-L-lactate guanylyltransferase from Halorubrum lacusprofundi (strain ATCC 49239 / DSM 5036 / JCM 8891 / ACAM 34).